A 310-amino-acid polypeptide reads, in one-letter code: tRNA dimethylallyltransferase (310 aa).

G13–T20 contributes to the ATP binding site. T15 to T20 serves as a coordination point for substrate. Interaction with substrate tRNA regions lie at residues D38–L41, Q162–R166, R243–R248, and K276–R283.

Belongs to the IPP transferase family. As to quaternary structure, monomer. It depends on Mg(2+) as a cofactor.

It carries out the reaction adenosine(37) in tRNA + dimethylallyl diphosphate = N(6)-dimethylallyladenosine(37) in tRNA + diphosphate. Catalyzes the transfer of a dimethylallyl group onto the adenine at position 37 in tRNAs that read codons beginning with uridine, leading to the formation of N6-(dimethylallyl)adenosine (i(6)A). The polypeptide is tRNA dimethylallyltransferase (Vibrio campbellii (strain ATCC BAA-1116)).